The chain runs to 99 residues: Large ribosomal subunit protein eL30 (99 aa).

It belongs to the eukaryotic ribosomal protein eL30 family. As to quaternary structure, part of the 50S ribosomal subunit.

The protein is Large ribosomal subunit protein eL30 of Pyrococcus furiosus (strain ATCC 43587 / DSM 3638 / JCM 8422 / Vc1).